Here is a 216-residue protein sequence, read N- to C-terminus: Probable GTP-binding protein EngB (216 aa).

The EngB-type G domain occupies 37–214 (AGLEVAFAGR…RAAMIKLIAE (178 aa)). GTP is bound by residues 45-52 (GRSNVGKS), 72-76 (GRTQE), 92-95 (DMPG), 159-162 (TKAD), and 193-195 (TSS). S52 and T74 together coordinate Mg(2+).

This sequence belongs to the TRAFAC class TrmE-Era-EngA-EngB-Septin-like GTPase superfamily. EngB GTPase family. The cofactor is Mg(2+).

Necessary for normal cell division and for the maintenance of normal septation. The polypeptide is Probable GTP-binding protein EngB (Rhodopseudomonas palustris (strain BisB18)).